Reading from the N-terminus, the 293-residue chain is Probable E3 ubiquitin-protein ligase RNF144A-A (293 aa).

The tract at residues 16–237 (PLVSCKLCLG…YDKGPCRNKL (222 aa)) is TRIAD supradomain. Positions 20, 23, 43, 46, 111, 116, 135, 138, 143, 146, 151, 156, 186, and 189 each coordinate Zn(2+). The RING-type 1 zinc finger occupies 20-70 (CKLCLGEFPLEQMTTITQCQCVFCTMCLKQYVELLIKEGFETAISCPDSAC). An IBR-type zinc finger spans residues 91–156 (QRYRKLQFEK…KASWHPDQDC (66 aa)). The RING-type 2; atypical zinc-finger motif lies at 186-215 (CPKCKVYIERDEGCAQMMCKNCKHAFCWYC). The active site involves Cys-199. 6 residues coordinate Zn(2+): Cys-204, Cys-207, Cys-212, Cys-215, His-227, and Cys-233. Residues 251-271 (VVGIFAGFGLLLLVASPFLLL) traverse the membrane as a helical segment.

Belongs to the RBR family. RNF144 subfamily.

Its subcellular location is the membrane. The enzyme catalyses [E2 ubiquitin-conjugating enzyme]-S-ubiquitinyl-L-cysteine + [acceptor protein]-L-lysine = [E2 ubiquitin-conjugating enzyme]-L-cysteine + [acceptor protein]-N(6)-ubiquitinyl-L-lysine.. The protein operates within protein modification; protein ubiquitination. Its function is as follows. E3 ubiquitin-protein ligase which accepts ubiquitin from E2 ubiquitin-conjugating enzymes ube2l3 and ube2l6 in the form of a thioester and then directly transfers the ubiquitin to targeted substrates. The protein is Probable E3 ubiquitin-protein ligase RNF144A-A (rnf144aa) of Danio rerio (Zebrafish).